Consider the following 1005-residue polypeptide: MIPKTKAEGVPDFVLLNQITENAFIENLTMRHKSDNIYTYIGDVVISTNPFKNLNIYKESDIKAYNGRYKYEMPPHIYALANDAYRSMRQSQENQCVIISGESGAGKTEASKKIMQFLTFVSSNQSPNGERISKMLLDSNPLLEAFGNAKTLRNDNSSRFGKYMEMQFNAVGSPIGGKITNYLLEKSRVVGRTQGERSFHIFYQMLKGLSQSKLNELGLTPNAPAYEYLKKSGCFDVSTIDDSGEFKIIVKAMETLGLKESDQNSIWRILAAILHIGNITFAEAAEQRTGTTTVKVSDTKSLAAAASCLKTDQQSLSIALCYRSISTGVGKRCSVISVPMDCNQAAYSRDALAKALYERLFNWLVSKINTIINCTTEKGPVIGILDIYGFEVFQNNSFEQLNINFCNEKLQQLFIELTLKSEQEEYVREGIEWKNIEYFNNKPICELIEKKPIGLISLLDEACLIAKSTDQTFLDSICKQFEKNPHLQSYVVSKDRSIGDTCFRLKHYAGDVTYDVRGFLDKNKDTLFGDLISSMQSSSDPLVQGLFPPTRPEDSKKRPETAGSQFRNAMNALITTLLACSPHYVRCIKSNDNKQAGVIDEDRVRHQVRYLGLLENVRVRRAGFAGRIEYTRFYNRYKMLCKKTWPSFNGTAKQATELILQQHNIDKEEIRMGKTKVFIRNPTTLFYFEEKRELEMPRIVTLIQKTWRGYRARSKWNQRKAAIKIQLFYRSYRYKKWFRELHRAFKDVARDPQWGKQVFWPKHPSILDRAVQLTHKIHNCWRAEKMILSLGAGQNHMRQKVMAYDIFHGKKKWDFRRHFDADYLEKPSNPNQQKYVLAMQNLFSTYGDTEVLFADYVIKVNPKGVPQRRGIVVTGTNIYKHDPKNYKVKKWGTPLVDVTSISISPMADTFLVLHCKAPQRDFVLDLGCNGYEAVSEITTVIVQQVLKLTGVKLSVQFTSSITYNNARPKGSDTILTFAPINNDPKLIGSQFKKGKGNQATIQFKD.

One can recognise a Myosin motor domain in the interval 8–693 (EGVPDFVLLN…TLFYFEEKRE (686 aa)). 101–108 (GESGAGKT) lines the ATP pocket. The tract at residues 539-562 (SDPLVQGLFPPTRPEDSKKRPETA) is disordered. The segment covering 551 to 560 (RPEDSKKRPE) has biased composition (basic and acidic residues). The segment at 556–630 (KKRPETAGSQ…RAGFAGRIEY (75 aa)) is actin-binding. 2 IQ domains span residues 694–722 (LEMPRIVTLIQKTWRGYRARSKWNQRKAA) and 716–745 (WNQRKAAIKIQLFYRSYRYKKWFRELHRAF). In terms of domain architecture, TH1 spans 810–1004 (KKKWDFRRHF…KGNQATIQFK (195 aa)).

Belongs to the TRAFAC class myosin-kinesin ATPase superfamily. Myosin family. Myosin I heavy chain is single-headed. Dimer of a heavy and a light chain. Inability to self-assemble into filaments.

Its function is as follows. Myosin is a protein that binds to actin and has ATPase activity that is activated by actin. May play a role in moving membranes relative to actin. The chain is Myosin IE heavy chain (myoE) from Dictyostelium discoideum (Social amoeba).